The sequence spans 598 residues: Aluminum-activated malate transporter 9 (598 aa).

A run of 6 helical transmembrane segments spans residues 88–108 (IVFSAKIGLALTIVALLIFYQ), 117–137 (YSVWAILTVVVVFEFTIGATL), 144–164 (ALGTLSAGGLALGMAELSTLF), 170–190 (IFCTLSIFCIGFLATFMKLYP), 194–214 (AYEYGFRVFLLTYCYILISGF), and 227–247 (FLLIALGAGVSLGVNMFIYPI).

This sequence belongs to the aromatic acid exporter (TC 2.A.85) family. In terms of tissue distribution, expressed in hypocotyls, leaves, roots, flowers, sepals and stamina. In leaves, expressed almost exclusively in mesophyll cells.

It localises to the vacuole membrane. Slow activation by external aluminum. Vacuolar malate channel. Has a higher selectivity for malate than for fumarate. Also exhibits a weak chloride conductance. In Arabidopsis thaliana (Mouse-ear cress), this protein is Aluminum-activated malate transporter 9 (ALMT9).